The primary structure comprises 206 residues: MAANKPKGQNSLALHKVIMVGSGGVGKSALTLQFMYDEFVEDYEPTKADSYRKKVVLDGEEVQIDILDTAGQEDYAAIRDNYFRSGEGFLCVFSITEMESFAATADFREQILRVKEDENVPFLLVGNKSDLEDKRQVSVEEAKNRAEQWNVNYVETSAKTRANVDKVFFDLMREIRARKMEDSKEKNGKKKRKSLAKRIRERCCIL.

GTP is bound by residues 24 to 29 (GVGKSA), 40 to 46 (VEDYEPT), and 127 to 130 (NKSD). Positions 43 to 51 (YEPTKADSY) match the Effector region motif. (Microbial infection) O-linked (Glc) threonine; by P.sordellii toxin TcsL glycosylation occurs at Thr-46. Position 194 is a phosphoserine; by AURKA (Ser-194). A Cysteine methyl ester modification is found at Cys-203. Residue Cys-203 is the site of S-geranylgeranyl cysteine attachment. Positions 204-206 (CIL) are cleaved as a propeptide — removed in mature form.

Belongs to the small GTPase superfamily. Ras family. In terms of assembly, interacts (via effector domain) with RALBP1; during mitosis, recruits RALBP1 to the mitochondrion where it promotes DNM1L phosphorylation and mitochondrial fission. Interacts with EXOC2/Sec5 and EXOC8/Exo84; binding to EXOC2 and EXOC8 is mutually exclusive. Interacts with Clostridium exoenzyme C3. Interacts with RALGPS1. Interacts with LPAR1 and LPAR2. Interacts with GRK2 in response to LPAR1 activation. RALA and GRK2 binding to LPAR1 is mutually exclusive. Interacts with CDC42. Post-translationally, phosphorylated. Phosphorylation at Ser-194 by AURKA/Aurora kinase A, during mitosis, induces RALA localization to the mitochondrion where it regulates mitochondrial fission. Prenylation is essential for membrane localization. The geranylgeranylated form and the farnesylated mutant do not undergo alternative prenylation in response to geranylgeranyltransferase I inhibitors (GGTIs) and farnesyltransferase I inhibitors (FTIs). In terms of processing, (Microbial infection) Glucosylated at Thr-46 by P.sordellii toxin TcsL from strain 6018. Monoglucosylation completely prevents the recognition of the downstream effector, blocking the GTPases in their inactive form. Not glucosylated by TcsL from strain VPI 9048.

The protein resides in the cell membrane. It localises to the cleavage furrow. Its subcellular location is the midbody. It is found in the midbody ring. The protein localises to the mitochondrion. It catalyses the reaction GTP + H2O = GDP + phosphate + H(+). Its activity is regulated as follows. Alternates between an inactive form bound to GDP and an active form bound to GTP. Activated by a guanine nucleotide-exchange factor (GEF) and inactivated by a GTPase-activating protein (GAP). Functionally, multifunctional GTPase involved in a variety of cellular processes including gene expression, cell migration, cell proliferation, oncogenic transformation and membrane trafficking. Accomplishes its multiple functions by interacting with distinct downstream effectors. Acts as a GTP sensor for GTP-dependent exocytosis of dense core vesicles. The RALA-exocyst complex regulates integrin-dependent membrane raft exocytosis and growth signaling. Key regulator of LPAR1 signaling and competes with GRK2 for binding to LPAR1 thus affecting the signaling properties of the receptor. Required for anchorage-independent proliferation of transformed cells. During mitosis, supports the stabilization and elongation of the intracellular bridge between dividing cells. Cooperates with EXOC2 to recruit other components of the exocyst to the early midbody. During mitosis, also controls mitochondrial fission by recruiting to the mitochondrion RALBP1, which mediates the phosphorylation and activation of DNM1L by the mitotic kinase cyclin B-CDK1. This is Ras-related protein Ral-A (RALA) from Homo sapiens (Human).